A 108-amino-acid polypeptide reads, in one-letter code: Iron-sulfur cluster assembly protein CyaY (108 aa).

The protein belongs to the frataxin family.

Functionally, involved in iron-sulfur (Fe-S) cluster assembly. May act as a regulator of Fe-S biogenesis. This is Iron-sulfur cluster assembly protein CyaY from Burkholderia mallei (strain NCTC 10247).